The chain runs to 388 residues: tRNA-specific adenosine deaminase 1 (388 aa).

The region spanning 63–388 (CLATGVKCTP…PNGGNEFQWI (326 aa)) is the A to I editase domain. His-89 lines the Zn(2+) pocket. The active-site Proton donor is the Glu-91. Arg-96 contacts 1D-myo-inositol hexakisphosphate. Cys-144 and Cys-201 together coordinate Zn(2+). 3 residues coordinate 1D-myo-inositol hexakisphosphate: Lys-204, Lys-357, and Arg-363.

Belongs to the ADAT1 family. The cofactor is 1D-myo-inositol hexakisphosphate. Zn(2+) serves as cofactor.

The protein resides in the cytoplasm. Its subcellular location is the nucleus. The catalysed reaction is adenosine(37) in tRNA(Ala) + H2O + H(+) = inosine(37) in tRNA(Ala) + NH4(+). Deaminates adenosine-37 to inosine in tRNA-Ala. In Schizosaccharomyces pombe (strain 972 / ATCC 24843) (Fission yeast), this protein is tRNA-specific adenosine deaminase 1.